The chain runs to 344 residues: Tripartite motif-containing protein 44 (344 aa).

The disordered stretch occupies residues 69-165 (PPASGDDALP…ETEAESEFDP (97 aa)). A compositionally biased stretch (acidic residues) spans 88–165 (EGEVESEVGE…ETEAESEFDP (78 aa)). A B box-type zinc finger spans residues 174–215 (VAKRKCPDHGLDLSTYCQEDRQLICVLCPVIGAHRGHQLSTL). Residues C179, H182, C201, and H207 each contribute to the Zn(2+) site. The stretch at 290–325 (AHVTEILADIQSHMDRLMTQMAQAKEQLDTSNESAE) forms a coiled coil. A disordered region spans residues 309 to 344 (QMAQAKEQLDTSNESAEPKAEGDEEGPSGASEEEDT). Residues 330–344 (GDEEGPSGASEEEDT) show a composition bias toward acidic residues. S336 and S339 each carry phosphoserine.

As to quaternary structure, interacts (via coiled coil) with TRIM17 (via coiled coil).

Its function is as follows. May play a role in the process of differentiation and maturation of neuronal cells. May regulate the activity of TRIM17. Is a negative regulator of PAX6 expression. This is Tripartite motif-containing protein 44 (Trim44) from Rattus norvegicus (Rat).